Here is a 153-residue protein sequence, read N- to C-terminus: Bursicon (153 aa).

The signal sequence occupies residues 1–22 (MLLYHIVGASVLICLLNETAKA). Cystine bridges form between cysteine 29–cysteine 78, cysteine 43–cysteine 92, cysteine 53–cysteine 113, cysteine 57–cysteine 115, and cysteine 75–cysteine 118. Residues 29–119 (CQATPVIHFL…PLECMCRPCT (91 aa)) form the CTCK domain.

In terms of assembly, heterodimer of burs and pburs.

It is found in the secreted. Its function is as follows. Final heterodimeric neurohormone released at the end of the molting cycle, involved in the sclerotization (tanning) of the insect cuticle, melanization and wing spreading. In Apis mellifera (Honeybee), this protein is Bursicon.